Here is a 293-residue protein sequence, read N- to C-terminus: Sphingolipid C4-hydroxylase sur2 (293 aa).

The next 3 helical transmembrane spans lie at 18–38 (LVSP…LHYI), 68–88 (AVLF…MFEG), and 127–147 (FIVP…WQYF). Residues 136 to 270 (FAFFIIDSWQ…FTFWDHVLGT (135 aa)) enclose the Fatty acid hydroxylase domain.

The protein belongs to the sterol desaturase family.

Its subcellular location is the endoplasmic reticulum membrane. Its pathway is membrane lipid metabolism; sphingolipid biosynthesis. Its function is as follows. Required for hydroxylation of C-4 in the sphingoid moiety of ceramide. Involved in the response to syringomycin. The protein is Sphingolipid C4-hydroxylase sur2 (sur2) of Schizosaccharomyces pombe (strain 972 / ATCC 24843) (Fission yeast).